We begin with the raw amino-acid sequence, 604 residues long: Ectonucleoside triphosphate diphosphohydrolase 7 (604 aa).

Topologically, residues 1-28 (MARISFSYLCPASWYFTVPTVSPFLRQR) are cytoplasmic. The helical transmembrane segment at 29–49 (VAFLGLFFISCLLLLMLIIDF) threads the bilayer. Over 50–546 (RHWSASLPRD…QAHGSWFRLS (497 aa)) the chain is Vesicular. Glu-217 functions as the Proton acceptor in the catalytic mechanism. Asn-330 carries an N-linked (GlcNAc...) asparagine glycan. A disulfide bridge links Cys-448 with Cys-477. The chain crosses the membrane as a helical span at residues 547 to 567 (FVYNHYLFFACILVVLLAIVL). Over 568-604 (YLLRLRRIHHRQTRASAPLDLLWLEEVVPMMGVQVGP) the chain is Cytoplasmic.

It belongs to the GDA1/CD39 NTPase family. Ca(2+) is required as a cofactor. The cofactor is Mg(2+).

The protein resides in the cytoplasmic vesicle membrane. The catalysed reaction is a ribonucleoside 5'-triphosphate + H2O = a ribonucleoside 5'-diphosphate + phosphate + H(+). It carries out the reaction UTP + H2O = UDP + phosphate + H(+). It catalyses the reaction GTP + H2O = GDP + phosphate + H(+). The enzyme catalyses CTP + H2O = CDP + phosphate + H(+). In terms of biological role, catalyzes the hydrolysis of nucleoside triphosphates and diphosphates in a calcium- or magnesium-dependent manner. Preferentially hydrolyzes nucleoside 5'-triphosphates, with substrate preference for UTP &gt; GTP &gt; CTP. Hydrolyzes ATP and nucleoside diphosphates only to a minor extent. In Pongo abelii (Sumatran orangutan), this protein is Ectonucleoside triphosphate diphosphohydrolase 7 (ENTPD7).